Reading from the N-terminus, the 445-residue chain is Histamine H3 receptor (445 aa).

The Extracellular segment spans residues Met1 to Ala39. N-linked (GlcNAc...) asparagine glycosylation is present at Asn11. A helical transmembrane segment spans residues Leu40–Val60. Over Ala61–Asn70 the chain is Cytoplasmic. A helical membrane pass occupies residues Phe71–Tyr91. At Val92–Lys108 the chain is on the extracellular side. An intrachain disulfide couples Cys107 to Cys188. Residues Leu109–Ser129 traverse the membrane as a helical segment. Residues Tyr130–Met156 are Cytoplasmic-facing. Residues Ala157 to Leu177 form a helical membrane-spanning segment. Topologically, residues Ser178–Trp196 are extracellular. A helical membrane pass occupies residues Tyr197–Phe217. At Asn218–Ser359 the chain is on the cytoplasmic side. 2 disordered regions span residues Asp234 to Trp259 and Ala286 to Arg336. Over residues Pro241–Pro256 the composition is skewed to pro residues. The span at Ala290–Ala299 shows a compositional bias: gly residues. Residues Ala300–Arg312 show a composition bias toward low complexity. The helical transmembrane segment at Leu360–Ile380 threads the bilayer. At Arg381–Thr396 the chain is on the extracellular side. The chain crosses the membrane as a helical span at residues Ser397–Tyr417. Over Ser418 to Lys445 the chain is Cytoplasmic. A Phosphoserine modification is found at Ser439.

Belongs to the G-protein coupled receptor 1 family. As to expression, expressed abundantly in brain, most notably throughout the thalamus, the ventromedial hypothalamus and the caudate nucleus. Isoform 1 is largely predominant in all tissues.

The protein resides in the cell membrane. In terms of biological role, the H3 subclass of histamine receptors could mediate the histamine signals in CNS and peripheral nervous system. Signals through the inhibition of adenylate cyclase and displays high constitutive activity (spontaneous activity in the absence of agonist). This chain is Histamine H3 receptor (Hrh3), found in Rattus norvegicus (Rat).